The chain runs to 75 residues: Translational regulator CsrA (75 aa).

This sequence belongs to the CsrA/RsmA family. In terms of assembly, homodimer; the beta-strands of each monomer intercalate to form a hydrophobic core, while the alpha-helices form wings that extend away from the core.

The protein localises to the cytoplasm. Its function is as follows. A translational regulator that binds mRNA to regulate translation initiation and/or mRNA stability. Usually binds in the 5'-UTR at or near the Shine-Dalgarno sequence preventing ribosome-binding, thus repressing translation. Its main target seems to be the major flagellin gene, while its function is anatagonized by FliW. The protein is Translational regulator CsrA of Alkaliphilus metalliredigens (strain QYMF).